The primary structure comprises 128 residues: Small ribosomal subunit protein uS11 (128 aa).

The protein belongs to the universal ribosomal protein uS11 family. Part of the 30S ribosomal subunit. Interacts with proteins S7 and S18. Binds to IF-3.

In terms of biological role, located on the platform of the 30S subunit, it bridges several disparate RNA helices of the 16S rRNA. Forms part of the Shine-Dalgarno cleft in the 70S ribosome. This Acinetobacter baylyi (strain ATCC 33305 / BD413 / ADP1) protein is Small ribosomal subunit protein uS11.